The chain runs to 262 residues: Nickel import ATP-binding protein NikD (262 aa).

The ABC transporter domain maps to 6 to 249 (LAIEGLTATT…PGHEVTRMLV (244 aa)). 42–49 (GASGSGKS) contacts ATP.

It belongs to the ABC transporter superfamily. Nickel importer (TC 3.A.1.5.3) family. As to quaternary structure, the complex is composed of two ATP-binding proteins (NikD and NikE), two transmembrane proteins (NikB and NikC) and a solute-binding protein (NikA).

The protein localises to the cell inner membrane. It catalyses the reaction Ni(2+)(out) + ATP + H2O = Ni(2+)(in) + ADP + phosphate + H(+). In terms of biological role, part of the ABC transporter complex NikABCDE involved in nickel import. Responsible for energy coupling to the transport system. This Brucella abortus biovar 1 (strain 9-941) protein is Nickel import ATP-binding protein NikD.